A 498-amino-acid chain; its full sequence is Cyclin-L1 (498 aa).

2 cyclin-like regions span residues 68-169 (ERIQ…RILK) and 182-266 (KIIV…NTMK). The disordered stretch occupies residues 294–498 (LKARGQNPNG…SGHSHSRHRR (205 aa)). Positions 311–320 (NGFSPASKPS) are enriched in polar residues. Basic and acidic residues predominate over residues 321-341 (SPRDVKMDDKSPNSKLKEPEN). Residues 366-396 (KNHSRSRSRSTSRSPHRHRRSHSGTYSSHSS) are RS. Residues 367-387 (NHSRSRSRSTSRSPHRHRRSH) are compositionally biased toward basic residues. Low complexity predominate over residues 388-402 (SGTYSSHSSHSPSPR). Ser-409 and Ser-412 each carry phosphoserine. Residues 415–426 (RTDRDRPSETSR) show a composition bias toward basic and acidic residues. Positions 427–440 (HSNKRRRSRSRSRS) are enriched in basic residues. The segment covering 441 to 478 (NSRERVRDRDHIKHKQERSGSGHHWDHRDRERDRSRDH) has biased composition (basic and acidic residues). A compositionally biased stretch (basic residues) spans 479-498 (GRNKRQSRSHSGHSHSRHRR).

It belongs to the cyclin family. Cyclin L subfamily.

It is found in the nucleus speckle. It localises to the nucleus. The protein resides in the nucleoplasm. Involved in pre-mRNA splicing. This Danio rerio (Zebrafish) protein is Cyclin-L1 (ccnl1).